A 688-amino-acid polypeptide reads, in one-letter code: DNA ligase (688 aa).

NAD(+) is bound by residues 42 to 46, 91 to 92, and glutamate 128; these read DAEYD and SL. The active-site N6-AMP-lysine intermediate is the lysine 130. NAD(+) is bound by residues arginine 151, glutamate 188, lysine 305, and lysine 329. Zn(2+) is bound by residues cysteine 423, cysteine 426, cysteine 441, and cysteine 447. The BRCT domain maps to 608 to 688; the sequence is APQGVLAGKT…GMRKLLEGQL (81 aa).

This sequence belongs to the NAD-dependent DNA ligase family. LigA subfamily. Mg(2+) serves as cofactor. Mn(2+) is required as a cofactor.

The catalysed reaction is NAD(+) + (deoxyribonucleotide)n-3'-hydroxyl + 5'-phospho-(deoxyribonucleotide)m = (deoxyribonucleotide)n+m + AMP + beta-nicotinamide D-nucleotide.. Functionally, DNA ligase that catalyzes the formation of phosphodiester linkages between 5'-phosphoryl and 3'-hydroxyl groups in double-stranded DNA using NAD as a coenzyme and as the energy source for the reaction. It is essential for DNA replication and repair of damaged DNA. This is DNA ligase from Paraburkholderia xenovorans (strain LB400).